The chain runs to 599 residues: Aspartate--tRNA(Asp/Asn) ligase (599 aa).

Residue E180 participates in L-aspartate binding. Residues 204-207 (QLLK) are aspartate. Position 226 (R226) interacts with L-aspartate. Residues 226-228 (RDE) and Q235 each bind ATP. H457 contributes to the L-aspartate binding site. E491 contributes to the ATP binding site. R498 is a binding site for L-aspartate. 543-546 (GWDR) is a binding site for ATP. A disordered region spans residues 565–599 (KAGGGRDPLTGAPAPISDEQRAETGVDYDPDADEN). A compositionally biased stretch (acidic residues) spans 590-599 (VDYDPDADEN).

It belongs to the class-II aminoacyl-tRNA synthetase family. Type 1 subfamily. As to quaternary structure, homodimer.

It is found in the cytoplasm. The catalysed reaction is tRNA(Asx) + L-aspartate + ATP = L-aspartyl-tRNA(Asx) + AMP + diphosphate. Functionally, aspartyl-tRNA synthetase with relaxed tRNA specificity since it is able to aspartylate not only its cognate tRNA(Asp) but also tRNA(Asn). Reaction proceeds in two steps: L-aspartate is first activated by ATP to form Asp-AMP and then transferred to the acceptor end of tRNA(Asp/Asn). In Bifidobacterium longum (strain DJO10A), this protein is Aspartate--tRNA(Asp/Asn) ligase.